Consider the following 214-residue polypeptide: Probable transaldolase (214 aa).

Lys-83 acts as the Schiff-base intermediate with substrate in catalysis.

This sequence belongs to the transaldolase family. Type 3B subfamily.

It localises to the cytoplasm. The catalysed reaction is D-sedoheptulose 7-phosphate + D-glyceraldehyde 3-phosphate = D-erythrose 4-phosphate + beta-D-fructose 6-phosphate. Its pathway is carbohydrate degradation; pentose phosphate pathway; D-glyceraldehyde 3-phosphate and beta-D-fructose 6-phosphate from D-ribose 5-phosphate and D-xylulose 5-phosphate (non-oxidative stage): step 2/3. In terms of biological role, transaldolase is important for the balance of metabolites in the pentose-phosphate pathway. The chain is Probable transaldolase from Clostridium botulinum (strain Alaska E43 / Type E3).